A 473-amino-acid chain; its full sequence is Cysteine protease ATG4A (473 aa).

Residues 1-33 (MTSLPGRGVSPSSSDPLCEGNAAPSSSSSGQDL) form a disordered region. The active-site Nucleophile is cysteine 160. Active-site residues include aspartate 357 and histidine 359.

The protein belongs to the peptidase C54 family. In terms of assembly, interacts with ATG8.

The protein localises to the cytoplasm. The catalysed reaction is [protein]-C-terminal L-amino acid-glycyl-phosphatidylethanolamide + H2O = [protein]-C-terminal L-amino acid-glycine + a 1,2-diacyl-sn-glycero-3-phosphoethanolamine. Cysteine protease that plays a key role in autophagy by mediating both proteolytic activation and delipidation of ATG8 family proteins. The protease activity is required for proteolytic activation of ATG8 family proteins: cleaves the C-terminal amino acid of ATG8 proteins to reveal a C-terminal glycine. Exposure of the glycine at the C-terminus is essential for ATG8 proteins conjugation to phosphatidylethanolamine (PE) and insertion to membranes, which is necessary for autophagy. In addition to the protease activity, also mediates delipidation of PE-conjugated ATG8 proteins. The protein is Cysteine protease ATG4A (ATG4A) of Oryza sativa subsp. indica (Rice).